The sequence spans 439 residues: uncharacterized protein (439 aa).

In terms of domain architecture, TRAM spans 1-55; the sequence is MLEQVRIQKMVNGGYGLAHLSNGKVVLVEGAYPGEEVLIKTYREKRDFSFGKVVS. Cys68, Cys74, Cys77, and Cys149 together coordinate [4Fe-4S] cluster. S-adenosyl-L-methionine is bound by residues Gln272, Tyr301, Glu322, and Asp367. The Nucleophile role is filled by Cys394.

The protein belongs to the class I-like SAM-binding methyltransferase superfamily. RNA M5U methyltransferase family.

This is an uncharacterized protein from Thermotoga maritima (strain ATCC 43589 / DSM 3109 / JCM 10099 / NBRC 100826 / MSB8).